The primary structure comprises 226 residues: Probable GPI-anchored adhesin-like protein PGA28 (226 aa).

An N-terminal signal peptide occupies residues 1–26 (MKFFAYFAVIALSSASLINLFKRATA). Positions 119–209 (DTEATTGSDT…SQQTSSHAGG (91 aa)) are disordered. A compositionally biased stretch (low complexity) spans 131 to 148 (KAATGATTSAGTGVTKTS). The segment covering 149–160 (ETGGVSSTANSE) has biased composition (polar residues). Residues 161–208 (AKSGSVTTSKSGSTSISESKTTSGSSSSGKSSSSTSSASSQQTSSHAG) are compositionally biased toward low complexity. Ser197 carries GPI-anchor amidated serine lipidation. A propeptide spans 198-226 (ASSQQTSSHAGGASGAFVSLLGLFAALLI) (removed in mature form).

In terms of processing, predicted to be a cleavage substrate for KEX2.

Its subcellular location is the cell membrane. In terms of biological role, putative adhesin which is involved in cell adhesion and virulence. Plays a role in Candida-bacterial interactions and subsequent regulation of filamentation. This is Probable GPI-anchored adhesin-like protein PGA28 (PGA28) from Candida albicans (strain SC5314 / ATCC MYA-2876) (Yeast).